The following is a 59-amino-acid chain: Small, acid-soluble spore protein H 1 (59 aa).

This sequence belongs to the SspH family.

The protein resides in the spore core. The chain is Small, acid-soluble spore protein H 1 (sspH1) from Bacillus cereus (strain ATCC 14579 / DSM 31 / CCUG 7414 / JCM 2152 / NBRC 15305 / NCIMB 9373 / NCTC 2599 / NRRL B-3711).